The sequence spans 266 residues: Undecaprenyl-diphosphatase 3 (266 aa).

8 helical membrane passes run 4-24 (IEAF…FLPI), 43-63 (SGRA…CWLY), 86-106 (FSVL…VDFI), 109-129 (VLFS…IIFW), 145-165 (ITFK…IPGT), 186-206 (TEFS…YDLL), 219-239 (NIGL…KALV), and 246-266 (TLRV…FVML).

It belongs to the UppP family.

It is found in the cell inner membrane. It carries out the reaction di-trans,octa-cis-undecaprenyl diphosphate + H2O = di-trans,octa-cis-undecaprenyl phosphate + phosphate + H(+). In terms of biological role, catalyzes the dephosphorylation of undecaprenyl diphosphate (UPP). Confers resistance to bacitracin. This chain is Undecaprenyl-diphosphatase 3, found in Acinetobacter baylyi (strain ATCC 33305 / BD413 / ADP1).